The primary structure comprises 649 residues: Quinol oxidase subunit 1 (649 aa).

Topologically, residues 1 to 13 (MKFKWDEFFVTGD) are extracellular. A helical transmembrane segment spans residues 14–34 (PLILGAQVSIALSTIAIIFVL). The Cytoplasmic segment spans residues 35-55 (TYFKKWKWLWSEWITTVDHKK). The chain crosses the membrane as a helical span at residues 56 to 76 (LGIMYIISAVIMLFRGGVDGL). Topologically, residues 77 to 104 (MMRAQLALPNNSFLDSNHYNEIFTTHGT) are extracellular. Residue histidine 102 coordinates Fe(II)-heme a. Residues 105–125 (IMIIFMAMPFLIGLINVVVPL) traverse the membrane as a helical segment. Topologically, residues 126-139 (QIGARDVAFPYLNN) are cytoplasmic. A helical transmembrane segment spans residues 140–160 (LSFWTFFVGAMLFNISFVIGG). Residues 161–187 (SPNAGWTSYMPLASNDMSPGPGENYYL) are Extracellular-facing. A helical transmembrane segment spans residues 188–208 (LGLQIAGIGTLMTGINFMVTI). Topologically, residues 209-228 (LKMRTKGMTLMRMPMFTWTT) are cytoplasmic. Residues 229 to 249 (LITMVIIVFAFPVLTVALALL) form a helical membrane-spanning segment. The Extracellular segment spans residues 250 to 273 (SFDRLFGAHFFTLEAGGMPMLWAN). Residues 274–294 (LFWIWGHPEVYIVILPAFGIF) form a helical membrane-spanning segment. 2 residues coordinate Cu cation: histidine 280 and tyrosine 284. Residues 280–284 (HPEVY) constitute a cross-link (1'-histidyl-3'-tyrosine (His-Tyr)). The Cytoplasmic segment spans residues 295–305 (SEIISSFARKQ). The helical transmembrane segment at 306–326 (LFGYTAMVGSIIAISVLSFLV) threads the bilayer. The Extracellular portion of the chain corresponds to 327–342 (WTHHFFTMGNSASVNS). Residues histidine 329 and histidine 330 each contribute to the Cu cation site. The helical transmembrane segment at 343-363 (FFSITTMAISIPTGVKIFNWL) threads the bilayer. The Cytoplasmic segment spans residues 364–376 (FTMYKGRISFTTP). The chain crosses the membrane as a helical span at residues 377 to 397 (MLWALAFIPNFVIGGVTGVML). The Extracellular segment spans residues 398–415 (AMAAADYQYHNTYFLVSH). Histidine 415 lines the heme a3 pocket. A helical transmembrane segment spans residues 416–436 (FHYVLIAGTVFACFAGFIFWY). Histidine 417 contributes to the Fe(II)-heme a binding site. Over 437 to 451 (PKMFGHKLNERIGKW) the chain is Cytoplasmic. Residues 452–472 (FFWIFMIGFNICFFPQYFLGL) traverse the membrane as a helical segment. Residues 473–492 (QGMPRRIYTYGPNDGWTTLN) lie on the Extracellular side of the membrane. The chain crosses the membrane as a helical span at residues 493–513 (FISTVGAFMMGVGFLILCYNI). Topologically, residues 514 to 585 (YYSFRYSTRE…KFKKIHMPSN (72 aa)) are cytoplasmic. A helical membrane pass occupies residues 586–603 (SGRPFFMSVAFGIAGFGL). The Extracellular portion of the chain corresponds to 604–606 (VFE). Residues 607–624 (WYWMGVVGLIGVLLCMVL) traverse the membrane as a helical segment. The Cytoplasmic segment spans residues 625-649 (RSFEYDNGYYISVDEIKETERKISE).

It belongs to the heme-copper respiratory oxidase family. It depends on Cu cation as a cofactor. Requires ferriheme a as cofactor. Heme A3. is required as a cofactor.

The protein resides in the cell membrane. It catalyses the reaction 2 a quinol + O2 = 2 a quinone + 2 H2O. It functions in the pathway energy metabolism; oxidative phosphorylation. Catalyzes quinol oxidation with the concomitant reduction of oxygen to water. Major component for energy conversion during vegetative growth. The polypeptide is Quinol oxidase subunit 1 (qoxB) (Bacillus spizizenii (strain ATCC 23059 / NRRL B-14472 / W23) (Bacillus subtilis subsp. spizizenii)).